Consider the following 164-residue polypeptide: Putative pre-16S rRNA nuclease (164 aa).

Belongs to the YqgF nuclease family.

The protein localises to the cytoplasm. Its function is as follows. Could be a nuclease involved in processing of the 5'-end of pre-16S rRNA. This is Putative pre-16S rRNA nuclease from Caulobacter sp. (strain K31).